The following is a 233-amino-acid chain: Sugar fermentation stimulation protein homolog (233 aa).

Belongs to the SfsA family.

In Teredinibacter turnerae (strain ATCC 39867 / T7901), this protein is Sugar fermentation stimulation protein homolog.